Consider the following 79-residue polypeptide: Keratin-associated protein 21-1 (79 aa).

As to quaternary structure, interacts with hair keratins.

Its function is as follows. In the hair cortex, hair keratin intermediate filaments are embedded in an interfilamentous matrix, consisting of hair keratin-associated proteins (KRTAP), which are essential for the formation of a rigid and resistant hair shaft through their extensive disulfide bond cross-linking with abundant cysteine residues of hair keratins. The matrix proteins include the high-sulfur and high-glycine-tyrosine keratins. This Homo sapiens (Human) protein is Keratin-associated protein 21-1 (KRTAP21-1).